Consider the following 361-residue polypeptide: Protease I (361 aa).

This sequence belongs to the peptidase U35 family. Might interact with viral portal protein; this interaction gives rise to an early 25S initiator complex. The scaffolding protein Z and the capsid protein T should then be added to the initiator complex to yield immature prohead. Host GroEL and GroES are also essential for the correct assembly of viral head. In terms of processing, the N-terminus is acetylated.

The protein localises to the host cytoplasm. Its function is as follows. Protease I is involved in virion assembly and maturation. Protease I cleaves the portal protein to yield mature procapsids competent for DNA packaging. Isoform scaffold protein Z probably helps the capsid proteins to assemble into a functional capsid. This is Protease I (I) from Escherichia phage Mu (Bacteriophage Mu).